Reading from the N-terminus, the 525-residue chain is Lysine--tRNA ligase (525 aa).

Mg(2+) is bound by residues Glu-430 and Glu-437.

The protein belongs to the class-II aminoacyl-tRNA synthetase family. In terms of assembly, homodimer. Mg(2+) is required as a cofactor.

Its subcellular location is the cytoplasm. The enzyme catalyses tRNA(Lys) + L-lysine + ATP = L-lysyl-tRNA(Lys) + AMP + diphosphate. The chain is Lysine--tRNA ligase from Chlamydia caviae (strain ATCC VR-813 / DSM 19441 / 03DC25 / GPIC) (Chlamydophila caviae).